A 349-amino-acid chain; its full sequence is Flap endonuclease 1-B (349 aa).

The segment at 1–105 (MGIKGLTKLL…GELAKRLARR (105 aa)) is N-domain. Residue Asp-34 coordinates Mg(2+). Arg-71 is a binding site for DNA. The Mg(2+) site is built by Asp-87, Glu-159, Glu-161, Asp-180, and Asp-182. The tract at residues 123–254 (DMEKYSKRTV…QTALKLIRQH (132 aa)) is I-domain. Glu-159 serves as a coordination point for DNA. Residues Gly-232 and Asp-234 each coordinate DNA. Residue Asp-234 coordinates Mg(2+).

Belongs to the XPG/RAD2 endonuclease family. FEN1 subfamily. In terms of assembly, interacts with PCNA. Three molecules of FEN1 bind to one PCNA trimer with each molecule binding to one PCNA monomer. PCNA stimulates the nuclease activity without altering cleavage specificity. The cofactor is Mg(2+). Phosphorylated. Phosphorylation upon DNA damage induces relocalization to the nuclear plasma.

The protein localises to the nucleus. Its subcellular location is the nucleolus. The protein resides in the nucleoplasm. It localises to the mitochondrion. In terms of biological role, structure-specific nuclease with 5'-flap endonuclease and 5'-3' exonuclease activities involved in DNA replication and repair. During DNA replication, cleaves the 5'-overhanging flap structure that is generated by displacement synthesis when DNA polymerase encounters the 5'-end of a downstream Okazaki fragment. It enters the flap from the 5'-end and then tracks to cleave the flap base, leaving a nick for ligation. Also involved in the long patch base excision repair (LP-BER) pathway, by cleaving within the apurinic/apyrimidinic (AP) site-terminated flap. Acts as a genome stabilization factor that prevents flaps from equilibrating into structures that lead to duplications and deletions. Also possesses 5'-3' exonuclease activity on nicked or gapped double-stranded DNA, and exhibits RNase H activity. Also involved in replication and repair of rDNA and in repairing mitochondrial DNA. The sequence is that of Flap endonuclease 1-B from Physcomitrium patens (Spreading-leaved earth moss).